A 1616-amino-acid chain; its full sequence is Vitellogenin-1 (1616 aa).

Residues Met-1 to Ala-19 form the signal peptide. The region spanning Phe-24 to Leu-689 is the Vitellogenin domain. N-linked (GlcNAc...) asparagine glycosylation is present at Asn-1270. The region spanning Ser-1310 to Glu-1479 is the VWFD domain. Cystine bridges form between Cys-1312/Cys-1442 and Cys-1334/Cys-1478. The segment covering Ser-1505–Gln-1514 has biased composition (acidic residues). Residues Ser-1505–Asp-1531 form a disordered region.

As to expression, expressed in the intestine of adult hermaphrodites.

It is found in the secreted. In terms of biological role, precursor of the egg-yolk proteins that are sources of nutrients during embryonic development. Together with other vitellogenins, may play a role in modulating life-span, acting via induction of autophagy and lysosomal lipolysis. The protein is Vitellogenin-1 (vit-1) of Caenorhabditis elegans.